A 33-amino-acid polypeptide reads, in one-letter code: Cytochrome b6-f complex subunit 8 (33 aa).

Residues 2–22 traverse the membrane as a helical segment; that stretch reads LFTVAWASLAAMFSFSIAMVV.

This sequence belongs to the PetN family. In terms of assembly, the 4 large subunits of the cytochrome b6-f complex are cytochrome b6, subunit IV (17 kDa polypeptide, PetD), cytochrome f and the Rieske protein, while the 4 small subunits are PetG, PetL, PetM and PetN. The complex functions as a dimer.

The protein localises to the cellular thylakoid membrane. Functionally, component of the cytochrome b6-f complex, which mediates electron transfer between photosystem II (PSII) and photosystem I (PSI), cyclic electron flow around PSI, and state transitions. The polypeptide is Cytochrome b6-f complex subunit 8 (Parasynechococcus marenigrum (strain WH8102)).